We begin with the raw amino-acid sequence, 131 residues long: Single-stranded DNA-binding protein 2 (131 aa).

Positions 1 to 103 (MYNKVIMIGR…VLASSFQLLE (103 aa)) constitute an SSB domain. Residues 126–131 (EEELPF) carry the Important for interaction with partner proteins motif.

Homotetramer.

Plays an important role in DNA replication, recombination and repair. Binds to ssDNA and to an array of partner proteins to recruit them to their sites of action during DNA metabolism. In Streptococcus agalactiae serotype V (strain ATCC BAA-611 / 2603 V/R), this protein is Single-stranded DNA-binding protein 2 (ssb2).